Reading from the N-terminus, the 64-residue chain is MPKMKTDKGVAKRFKKTANGFKRKQAHLRHILTKKSTKRKRHLRAKCQVAKSDVPAIARQLPYA.

It belongs to the bacterial ribosomal protein bL35 family.

In Shewanella sediminis (strain HAW-EB3), this protein is Large ribosomal subunit protein bL35.